Reading from the N-terminus, the 269-residue chain is Glutamate racemase (269 aa).

Substrate contacts are provided by residues 7–8 and 39–40; these read DS and YG. The Proton donor/acceptor role is filled by Cys-70. 71–72 contacts substrate; it reads NT. Cys-194 serves as the catalytic Proton donor/acceptor. 195 to 196 contacts substrate; the sequence is TH.

Belongs to the aspartate/glutamate racemases family.

The catalysed reaction is L-glutamate = D-glutamate. It functions in the pathway cell wall biogenesis; peptidoglycan biosynthesis. In terms of biological role, provides the (R)-glutamate required for cell wall biosynthesis. This is Glutamate racemase from Roseobacter denitrificans (strain ATCC 33942 / OCh 114) (Erythrobacter sp. (strain OCh 114)).